Here is a 382-residue protein sequence, read N- to C-terminus: F-box/kelch-repeat protein KIB1 (382 aa).

In terms of domain architecture, F-box spans 22–69 (SKHSILAVDLVRLILERLSFVDFHRARCVSSIWYIASKTVIGVTNPTT). 3 Kelch repeats span residues 73 to 117 (ILFP…ASSG), 159 to 209 (VLWV…FKEN), and 259 to 306 (IVAK…ITVE).

Part of a SCF (SKP1-cullin-F-box) protein ligase complex. Binds directly to several GSK3 family proteins such as SKP1A/ASK1, ASK1/SK11, ASK3/SK12, ASK5/SK13, ASK7/BIN2/SK21, ASK9/SK22 and ASK6/SK23. Interacts with ASK7/BIN2/SK21 in a brassinosteroid (BR)-dependent manner. As to expression, expressed in seedlings, leaves, stems, flower buds and flowers.

It is found in the cytoplasm. Its subcellular location is the nucleus. The protein resides in the nucleolus. Functionally, component of SCF(ASK-cullin-F-box) E3 ubiquitin ligase complexes, which may mediate the ubiquitination and subsequent proteasomal degradation of target proteins. Required for brassinosteroid (BR) signal transduction. Mediates ASK7/BIN2/SK21 inactivation both by competing with substrate binding (e.g. BZR1) and by promoting its ubiquitination and subsequent proteasomal degradation. The polypeptide is F-box/kelch-repeat protein KIB1 (Arabidopsis thaliana (Mouse-ear cress)).